The primary structure comprises 427 residues: Light-independent protochlorophyllide reductase subunit N (427 aa).

Cys-30, Cys-55, and Cys-116 together coordinate [4Fe-4S] cluster.

Belongs to the BchN/ChlN family. In terms of assembly, protochlorophyllide reductase is composed of three subunits; BchL, BchN and BchB. Forms a heterotetramer of two BchB and two BchN subunits. The cofactor is [4Fe-4S] cluster.

It catalyses the reaction chlorophyllide a + oxidized 2[4Fe-4S]-[ferredoxin] + 2 ADP + 2 phosphate = protochlorophyllide a + reduced 2[4Fe-4S]-[ferredoxin] + 2 ATP + 2 H2O. The protein operates within porphyrin-containing compound metabolism; bacteriochlorophyll biosynthesis (light-independent). In terms of biological role, component of the dark-operative protochlorophyllide reductase (DPOR) that uses Mg-ATP and reduced ferredoxin to reduce ring D of protochlorophyllide (Pchlide) to form chlorophyllide a (Chlide). This reaction is light-independent. The NB-protein (BchN-BchB) is the catalytic component of the complex. This is Light-independent protochlorophyllide reductase subunit N from Rhodopseudomonas palustris (strain BisA53).